The chain runs to 302 residues: 1,2-dihydroxynaphthalene dioxygenase (302 aa).

VOC domains are found at residues 9 to 124 and 149 to 270; these read ELGY…IFWG and GLGH…PGWR. His-152 is a Fe cation binding site. Substrate is bound by residues His-152, 199-200, His-215, and Tyr-256; that span reads DH. Residue His-215 participates in Fe cation binding. Glu-266 is a binding site for Fe cation.

The protein belongs to the extradiol ring-cleavage dioxygenase family. Fe(2+) serves as cofactor.

It catalyses the reaction naphthalene-1,2-diol + O2 = 2-hydroxychromene-2-carboxylate + H(+). It participates in aromatic compound metabolism; naphthalene degradation. With respect to regulation, inhibited by bathophenanthroline sulfonate, o-phenanthroline, 8-hydroxyquinoline, 2,2'-dipyridyl and p-chlormercuribenzoate. Also inhibited by Hg(2+), Cu(2+), Co(2+) and Fe(3+) ions. Functionally, involved in the naphthalene catabolic pathway. Catalyzes the meta-cleavage of 1,2-dihydroxynaphthalene (1,2-DHN) to yield 2-hydroxychromene-2-carboxylic acid. Can also cleave 3-methylcatechol and 4-methylcatechol. The sequence is that of 1,2-dihydroxynaphthalene dioxygenase (nahC) from Pseudomonas putida (Arthrobacter siderocapsulatus).